The sequence spans 78 residues: Large ribosomal subunit protein bL28 (78 aa).

The interval 1–24 is disordered; that stretch reads MSQVCQVTGKRPVTGNNVSHSQRK.

It belongs to the bacterial ribosomal protein bL28 family.

The chain is Large ribosomal subunit protein bL28 from Chromohalobacter salexigens (strain ATCC BAA-138 / DSM 3043 / CIP 106854 / NCIMB 13768 / 1H11).